The primary structure comprises 513 residues: Bifunctional purine biosynthesis protein PurH (513 aa).

Positions 1 to 147 (MIQIKRALVS…KNHKNVVVLT (147 aa)) constitute an MGS-like domain.

This sequence belongs to the PurH family.

It carries out the reaction (6R)-10-formyltetrahydrofolate + 5-amino-1-(5-phospho-beta-D-ribosyl)imidazole-4-carboxamide = 5-formamido-1-(5-phospho-D-ribosyl)imidazole-4-carboxamide + (6S)-5,6,7,8-tetrahydrofolate. It catalyses the reaction IMP + H2O = 5-formamido-1-(5-phospho-D-ribosyl)imidazole-4-carboxamide. Its pathway is purine metabolism; IMP biosynthesis via de novo pathway; 5-formamido-1-(5-phospho-D-ribosyl)imidazole-4-carboxamide from 5-amino-1-(5-phospho-D-ribosyl)imidazole-4-carboxamide (10-formyl THF route): step 1/1. The protein operates within purine metabolism; IMP biosynthesis via de novo pathway; IMP from 5-formamido-1-(5-phospho-D-ribosyl)imidazole-4-carboxamide: step 1/1. The polypeptide is Bifunctional purine biosynthesis protein PurH (Leptospira biflexa serovar Patoc (strain Patoc 1 / Ames)).